Here is a 328-residue protein sequence, read N- to C-terminus: Reticulocalbin-3 (328 aa).

The first 20 residues, 1 to 20 (MMWRWTLMLLLLLLRHWALG), serve as a signal peptide directing secretion. The disordered stretch occupies residues 24–48 (PDAGPHGQDRVHHGTPLSEAPHDDA). EF-hand domains lie at 75–112 (ESQA…TQQR), 113–148 (HIRD…HYEP), 163–198 (KMLA…EEFP), 200–235 (MRDI…AEPG), 241–276 (WVQT…PSQD), and 277–312 (QPLV…FVGS). Ca(2+)-binding residues include Asp-92, Asp-94, Trp-96, Glu-101, Asp-126, Asp-128, Asp-130, Arg-132, and Glu-137. Asn-140 is a glycosylation site (N-linked (GlcNAc...) asparagine). Asp-176, Asp-178, Asp-180, Met-182, Glu-187, Asp-213, Asn-215, Asp-217, Tyr-219, Glu-224, Asp-254, Asn-256, Asp-258, Arg-260, Glu-265, Asp-290, Asp-292, Asp-294, Arg-296, and Glu-301 together coordinate Ca(2+). The short motif at 325-328 (HDEL) is the Prevents secretion from ER element.

This sequence belongs to the CREC family. As to quaternary structure, interacts with PCSK6 (immature form including the propeptide); probably involved in the maturation and the secretion of PCSK6. Post-translationally, N-glycosylated. Degraded by PCSK6 and other endoproteases including FURIN and PCSK5.

It is found in the endoplasmic reticulum lumen. Probable molecular chaperone assisting protein biosynthesis and transport in the endoplasmic reticulum. Required for the proper biosynthesis and transport of pulmonary surfactant-associated protein A/SP-A, pulmonary surfactant-associated protein D/SP-D and the lipid transporter ABCA3. By regulating both the proper expression and the degradation through the endoplasmic reticulum-associated protein degradation pathway of these proteins plays a crucial role in pulmonary surfactant homeostasis. Has an anti-fibrotic activity by negatively regulating the secretion of type I and type III collagens. This calcium-binding protein also transiently associates with immature PCSK6 and regulates its secretion. The sequence is that of Reticulocalbin-3 from Rattus norvegicus (Rat).